The sequence spans 573 residues: MTHPDRANVNPGSPPLRETLSQLRLRELLLEVQDRIEQIVEGRDRLDGLIDAILAITSGLKLDATLRAIVHTAAELVDARYGALGVRGYDHRLVEFVYEGIDEETRHLIGSLPEGRGVLGALIEEPKPIRLDDISRHPASVGFPLHHPPMRTFLGVPVRIRDEVFGNLYLTEKADGQPFSDDDEVLVQALAAAAGIAVDNARLFEESRTREAWIEATRDIGTQMLAGADPAMVFRLIAEEALTLMAGAATLVAVPLDDEAPACEVDDLVIVEVAGEISPAVKQMTVAVSGTSIGGVFHDRTPRRFDRLDLAVDGPVEPGPALVLPLRAADTVAGVLVALRSADEQPFSDKQLDMMAAFADQAALAWRLATAQRQMREVEILTDRDRIARDLHDHVIQRLFAVGLTLQGAAPRARVPAVRESIYSSIDDLQEIIQEIRSAIFDLHAGPSRATGLRHRLDKVIDQLAIPALHTTVQYTGPLSVVDTVLANHAEAVLREAVSNAVRHANATSLAINVSVEDDVRVEVVDDGVGISGDITESGLRNLRQRADDAGGEFTVENMPTGGTLLRWSAPLR.

2 consecutive GAF domains span residues 61–198 and 229–366; these read KLDA…GIAV and DPAM…ALAW. Histidine 147 is a binding site for heme. In terms of domain architecture, Histidine kinase spans 380-573; the sequence is ILTDRDRIAR…TLLRWSAPLR (194 aa). Phosphohistidine; by autocatalysis is present on histidine 392.

Mg(2+) is required as a cofactor. The cofactor is heme.

The protein localises to the cytoplasm. Interacts with the two-component regulatory system DevR/DevS (DosR/DosS) involved in onset of the dormancy response. Required for full induction of the DevR (DosR) regulon; required during early adaptation to anaerobiosis, to start induction of the DevR regulon. May act as a direct hypoxia/oxygen sensor. May be the secondary sensor for CO. Donates a phosphate group to DevR (DosR). The chain is Oxygen sensor histidine kinase response regulator DosT (dosT) from Mycobacterium tuberculosis (strain CDC 1551 / Oshkosh).